The chain runs to 840 residues: Protein translocase subunit SecA (840 aa).

ATP-binding positions include Gln87, 105–109 (GEGKT), and Asp494. The segment at 518–537 (RRIDNQLRGRSGRQGDPGSS) is disordered. Zn(2+)-binding residues include Cys826, Cys828, Cys837, and Cys838.

Belongs to the SecA family. Monomer and homodimer. Part of the essential Sec protein translocation apparatus which comprises SecA, SecYEG and auxiliary proteins SecDF-YajC and YidC. It depends on Zn(2+) as a cofactor.

The protein localises to the cell inner membrane. The protein resides in the cytoplasm. It catalyses the reaction ATP + H2O + cellular proteinSide 1 = ADP + phosphate + cellular proteinSide 2.. Part of the Sec protein translocase complex. Interacts with the SecYEG preprotein conducting channel. Has a central role in coupling the hydrolysis of ATP to the transfer of proteins into and across the cell membrane, serving as an ATP-driven molecular motor driving the stepwise translocation of polypeptide chains across the membrane. This Desulforapulum autotrophicum (strain ATCC 43914 / DSM 3382 / VKM B-1955 / HRM2) (Desulfobacterium autotrophicum) protein is Protein translocase subunit SecA.